Here is a 403-residue protein sequence, read N- to C-terminus: D-mannonate dehydratase (403 aa).

Substrate-binding residues include N38 and H123. The active-site Proton donor/acceptor is the Y160. Position 211 (D211) interacts with Mg(2+). H213 serves as the catalytic Proton donor/acceptor. The Mg(2+) site is built by E237 and E263. The substrate site is built by E263, R284, H313, D317, and E340.

The protein belongs to the mandelate racemase/muconate lactonizing enzyme family. GalD subfamily. The cofactor is Mg(2+).

It catalyses the reaction D-mannonate = 2-dehydro-3-deoxy-D-gluconate + H2O. Its pathway is carbohydrate metabolism; pentose and glucuronate interconversion. Functionally, catalyzes the dehydration of D-mannonate. Has no detectable activity with a panel of 70 other acid sugars (in vitro). In Sphingomonas sp. (strain SKA58), this protein is D-mannonate dehydratase.